Consider the following 360-residue polypeptide: Coiled-coil domain-containing protein 86 (360 aa).

Residues 1 to 12 are compositionally biased toward basic residues; it reads MDTPLRRSRRLG. 2 disordered regions span residues 1–314 and 328–360; these read MDTP…ENER and LKRAKKKQLRSIEKRDTLALLQKQPPQRPAAKI. 5 positions are modified to phosphoserine: Ser-21, Ser-24, Ser-47, Ser-50, and Ser-58. Phosphothreonine is present on Thr-65. A phosphoserine mark is found at Ser-66, Ser-69, Ser-80, Ser-91, Ser-102, Ser-110, Ser-113, and Ser-128. Over residues 66 to 83 the composition is skewed to polar residues; sequence SPGSPRLQQGSGLESPQG. Pro residues predominate over residues 153–164; that stretch reads QLPPVPGSPEPY. Ser-188, Ser-217, and Ser-218 each carry phosphoserine. The segment covering 238-254 has biased composition (basic residues); the sequence is GKPKSGRVWKDRSKKRF. Positions 272–323 form a coiled coil; it reads KERQERKLAKDFARHLEEEKERRRQEKKQRRAENLKRRLENERKAEVVQVIR. 2 stretches are compositionally biased toward basic and acidic residues: residues 273–295 and 302–314; these read ERQERKLAKDFARHLEEEKERRR and RAENLKRRLENER. A Citrulline modification is found at Arg-342.

In terms of processing, citrullinated by PADI4.

Its subcellular location is the nucleus. It localises to the chromosome. It is found in the nucleolus. In terms of biological role, required for proper chromosome segregation during mitosis and error-free mitotic progression. The polypeptide is Coiled-coil domain-containing protein 86 (Pongo abelii (Sumatran orangutan)).